The primary structure comprises 256 residues: Pimeloyl-[acyl-carrier protein] methyl ester esterase (256 aa).

An AB hydrolase-1 domain is found at 15-242 (HLVLLHGWGL…AAHAPFISHP (228 aa)). Residues W22, 82 to 83 (SL), and 143 to 147 (FLALQ) each bind substrate. The Nucleophile role is filled by S82. Residues D207 and H235 contribute to the active site. H235 is a substrate binding site.

The protein belongs to the AB hydrolase superfamily. Carboxylesterase BioH family. As to quaternary structure, monomer.

It localises to the cytoplasm. It carries out the reaction 6-carboxyhexanoyl-[ACP] methyl ester + H2O = 6-carboxyhexanoyl-[ACP] + methanol + H(+). The protein operates within cofactor biosynthesis; biotin biosynthesis. Functionally, the physiological role of BioH is to remove the methyl group introduced by BioC when the pimeloyl moiety is complete. It allows to synthesize pimeloyl-ACP via the fatty acid synthetic pathway through the hydrolysis of the ester bonds of pimeloyl-ACP esters. The polypeptide is Pimeloyl-[acyl-carrier protein] methyl ester esterase (Escherichia coli O139:H28 (strain E24377A / ETEC)).